Here is a 376-residue protein sequence, read N- to C-terminus: Cytochrome b (376 aa).

Helical transmembrane passes span 28–48, 72–94, 107–127, and 169–189; these read YGFL…FLAS, WCFR…LHIL, SWIS…IGYV, and FFVL…IHIF. Positions 78 and 92 each coordinate heme b. Heme b is bound by residues histidine 173 and histidine 187. Residue histidine 192 participates in a ubiquinone binding. 4 consecutive transmembrane segments (helical) span residues 214-234, 274-294, 317-337, and 340-360; these read LLSL…IQSI, IPSK…LFLL, VPII…CQLP, and IFIL…LFAL.

This sequence belongs to the cytochrome b family. As to quaternary structure, the main subunits of complex b-c1 are: cytochrome b, cytochrome c1 and the Rieske protein. Heme b is required as a cofactor.

Its subcellular location is the mitochondrion inner membrane. Component of the ubiquinol-cytochrome c reductase complex (complex III or cytochrome b-c1 complex) that is part of the mitochondrial respiratory chain. The b-c1 complex mediates electron transfer from ubiquinol to cytochrome c. Contributes to the generation of a proton gradient across the mitochondrial membrane that is then used for ATP synthesis. This chain is Cytochrome b (MT-CYB), found in Plasmodium chabaudi.